Here is a 565-residue protein sequence, read N- to C-terminus: MTTVHTFSILLFFCSLFSASLIIAKVQHHDFVIQETPVKRLCKTRNAITVNGMFPGPTLEVNNGDTLEVKVHNRARYNITIHWHGVRQIRTGWADGPEFVTQCPIRPGKSYTYRFTIQGQEGTLWWHAHSSWLRATVYGALIIHPTPGSSFPFPKPDRQTALMLGEWWNANPVDVINQATRTGAAPNISDAYTINGQPGDLYNCSTKETVVVPINSGETSLLRVINAALNQPLFFTVANHKLTVVGADASYLKPFTTKVLMLGPGQTTDVLLTADQPPKRYYIAARAYQSAQNAPFDNTTTTAILQYKKTTTTSKPIMPVLPAFNDTNTVTSFSRKFKSLRNVVVPKTIDDNLFFTIGLGLDNCPKKFPKSRCQGLNGTRFTASMNNVSFVLPSNFSLLQAHSNGIPGVFTTDFPSKPPVKFDYTGNNISRALFQPVKGTKLYKLKYGSRVQVVLQDTNIVTSENHPIHLHGYDFYIVGEGFGNFNPKKDTSKFNLVDPPLRNTVAVPVNGWAVIRFVADNPGVWLMHCHLDVHIKWGLAMAFLVDNGVGELETLEAPPHDLPIC.

Residues Met1–Ala24 form the signal peptide. Plastocyanin-like domains follow at residues Val32–Gly148 and Arg158–Thr310. A glycan (N-linked (GlcNAc...) asparagine) is linked at Asn78. The Cu cation site is built by His82, His84, His127, and His129. 8 N-linked (GlcNAc...) asparagine glycosylation sites follow: Asn187, Asn203, Asn298, Asn325, Asn377, Asn387, Asn395, and Asn428. A Plastocyanin-like 3 domain is found at Asp413–Val549. Residues His466, His469, His471, His528, Cys529, His530, and His534 each coordinate Cu cation.

This sequence belongs to the multicopper oxidase family. It depends on Cu cation as a cofactor. In terms of tissue distribution, predominantly expressed in the inflorescence stem.

Its subcellular location is the secreted. It is found in the extracellular space. It localises to the apoplast. It carries out the reaction 4 hydroquinone + O2 = 4 benzosemiquinone + 2 H2O. Lignin degradation and detoxification of lignin-derived products. The protein is Laccase-12 (LAC12) of Arabidopsis thaliana (Mouse-ear cress).